We begin with the raw amino-acid sequence, 668 residues long: DNA ligase (668 aa).

NAD(+) contacts are provided by residues 34–38 (DTEYD), 83–84 (SL), and E114. The N6-AMP-lysine intermediate role is filled by K116. NAD(+) is bound by residues R137, E171, K286, and K310. Residues C404, C407, C422, and C427 each coordinate Zn(2+). The region spanning 588 to 668 (NSDSIIANKS…FFDLLKSEKG (81 aa)) is the BRCT domain.

It belongs to the NAD-dependent DNA ligase family. LigA subfamily. Mg(2+) serves as cofactor. It depends on Mn(2+) as a cofactor.

It catalyses the reaction NAD(+) + (deoxyribonucleotide)n-3'-hydroxyl + 5'-phospho-(deoxyribonucleotide)m = (deoxyribonucleotide)n+m + AMP + beta-nicotinamide D-nucleotide.. Its function is as follows. DNA ligase that catalyzes the formation of phosphodiester linkages between 5'-phosphoryl and 3'-hydroxyl groups in double-stranded DNA using NAD as a coenzyme and as the energy source for the reaction. It is essential for DNA replication and repair of damaged DNA. This is DNA ligase from Mycoplasma mycoides subsp. mycoides SC (strain CCUG 32753 / NCTC 10114 / PG1).